The chain runs to 476 residues: Serine/threonine-protein kinase PknF (476 aa).

Thr8 and Thr13 each carry phosphothreonine; by autocatalysis. Residues 12–279 form the Protein kinase domain; it reads FTIVRQLGSG…FARALGHRLG (268 aa). ATP-binding positions include 18 to 26 and Lys41; that span reads LGSGGMGEV. Asp137 serves as the catalytic Proton acceptor. Residues Thr173, Thr175, and Thr287 each carry the phosphothreonine; by autocatalysis modification. The residue at position 290 (Ser290) is a Phosphoserine; by autocatalysis. Residues 332-376 are disordered; that stretch reads ADDERAAQPARTRTTTSAGTTTSVAPASTTRPAPTTPTTTGAADT. The span at 338–376 shows a compositional bias: low complexity; the sequence is AQPARTRTTTSAGTTTSVAPASTTRPAPTTPTTTGAADT.

Belongs to the protein kinase superfamily. Ser/Thr protein kinase family. Post-translationally, dephosphorylated by PstP.

It carries out the reaction L-seryl-[protein] + ATP = O-phospho-L-seryl-[protein] + ADP + H(+). The enzyme catalyses L-threonyl-[protein] + ATP = O-phospho-L-threonyl-[protein] + ADP + H(+). This Mycobacterium bovis (strain ATCC BAA-935 / AF2122/97) protein is Serine/threonine-protein kinase PknF (pknF).